The chain runs to 215 residues: Thiamine-phosphate synthase (215 aa).

4-amino-2-methyl-5-(diphosphooxymethyl)pyrimidine is bound by residues 43-47 (QFRDK) and Asn78. Residues Asp79 and Asp98 each contribute to the Mg(2+) site. Ser117 provides a ligand contact to 4-amino-2-methyl-5-(diphosphooxymethyl)pyrimidine. Position 143 to 145 (143 to 145 (TNS)) interacts with 2-[(2R,5Z)-2-carboxy-4-methylthiazol-5(2H)-ylidene]ethyl phosphate. Lys146 provides a ligand contact to 4-amino-2-methyl-5-(diphosphooxymethyl)pyrimidine. Residues Gly174 and 194 to 195 (IS) each bind 2-[(2R,5Z)-2-carboxy-4-methylthiazol-5(2H)-ylidene]ethyl phosphate.

The protein belongs to the thiamine-phosphate synthase family. Requires Mg(2+) as cofactor.

It catalyses the reaction 2-[(2R,5Z)-2-carboxy-4-methylthiazol-5(2H)-ylidene]ethyl phosphate + 4-amino-2-methyl-5-(diphosphooxymethyl)pyrimidine + 2 H(+) = thiamine phosphate + CO2 + diphosphate. It carries out the reaction 2-(2-carboxy-4-methylthiazol-5-yl)ethyl phosphate + 4-amino-2-methyl-5-(diphosphooxymethyl)pyrimidine + 2 H(+) = thiamine phosphate + CO2 + diphosphate. The enzyme catalyses 4-methyl-5-(2-phosphooxyethyl)-thiazole + 4-amino-2-methyl-5-(diphosphooxymethyl)pyrimidine + H(+) = thiamine phosphate + diphosphate. It participates in cofactor biosynthesis; thiamine diphosphate biosynthesis; thiamine phosphate from 4-amino-2-methyl-5-diphosphomethylpyrimidine and 4-methyl-5-(2-phosphoethyl)-thiazole: step 1/1. Functionally, condenses 4-methyl-5-(beta-hydroxyethyl)thiazole monophosphate (THZ-P) and 2-methyl-4-amino-5-hydroxymethyl pyrimidine pyrophosphate (HMP-PP) to form thiamine monophosphate (TMP). This Lactococcus lactis subsp. lactis (strain IL1403) (Streptococcus lactis) protein is Thiamine-phosphate synthase.